Consider the following 860-residue polypeptide: Protein argonaute-3 (860 aa).

In terms of domain architecture, PAZ spans 230–349 (PVIQFMCEVL…LPLEVCNIVA (120 aa)). The region spanning 518-819 (LIIVILPGKT…VAFRARYHLV (302 aa)) is the Piwi domain. An interaction with guide RNA region spans residues 530-567 (YAEVKRVGDTLLGMATQCVQVKNVVKTSPQTLSNLCLK). A divalent metal cation contacts are provided by D598, E638, and D670. Residues 758–805 (QGTSRPSHYYVLWDDNCFTADEFQLLTYQLCHTYVRCTRSVSIPAPAY) are interaction with guide RNA. Residue H808 coordinates a divalent metal cation.

It belongs to the argonaute family. Ago subfamily.

The protein localises to the cytoplasm. It localises to the P-body. It carries out the reaction Endonucleolytic cleavage to 5'-phosphomonoester.. Its function is as follows. Required for RNA-mediated gene silencing (RNAi). Binds to short RNAs such as microRNAs (miRNAs) and represses the translation of mRNAs which are complementary to them. Possesses RNA slicer activity but only on select RNAs bearing 5'- and 3'-flanking sequences to the region of guide-target complementarity. The protein is Protein argonaute-3 (ago3) of Danio rerio (Zebrafish).